The chain runs to 523 residues: Translation initiation factor eIF2B subunit delta (523 aa).

A disordered region spans residues 1–147 (MAAVAVAVRE…PSGVKRLPEY (147 aa)). Alanine 2 carries the N-acetylalanine modification. Position 12 is a phosphoserine (serine 12). Residues 30-40 (EMTKEEKLQLR) are compositionally biased toward basic and acidic residues. The span at 41 to 51 (KEKKQQKKKRK) shows a compositional bias: basic residues. Phosphothreonine is present on threonine 86. Residues 87–121 (PREKVPAGRSKAELRAERRAKQEAERALKQARKGE) are compositionally biased toward basic and acidic residues. At serine 130 the chain carries Phosphoserine. Positions 170 to 179 (RKDYGSKVSL) are may bind the chemical integrated stress response (ISR) inhibitor ISRIB.

Belongs to the eIF-2B alpha/beta/delta subunits family. Component of the translation initiation factor 2B (eIF2B) complex which is a heterodecamer of two sets of five different subunits: alpha, beta, gamma, delta and epsilon. Subunits alpha, beta and delta comprise a regulatory subcomplex and subunits epsilon and gamma comprise a catalytic subcomplex. Within the complex, the hexameric regulatory complex resides at the center, with the two heterodimeric catalytic subcomplexes bound on opposite sides.

The protein resides in the cytoplasm. The protein localises to the cytosol. With respect to regulation, activated by the chemical integrated stress response (ISR) inhibitor ISRIB which stimulates guanine nucleotide exchange factor activity for both phosphorylated and unphosphorylated eIF2. In terms of biological role, acts as a component of the translation initiation factor 2B (eIF2B) complex, which catalyzes the exchange of GDP for GTP on eukaryotic initiation factor 2 (eIF2) gamma subunit. Its guanine nucleotide exchange factor activity is repressed when bound to eIF2 complex phosphorylated on the alpha subunit, thereby limiting the amount of methionyl-initiator methionine tRNA available to the ribosome and consequently global translation is repressed. In Homo sapiens (Human), this protein is Translation initiation factor eIF2B subunit delta (EIF2B4).